The following is a 96-amino-acid chain: MSIKLINIGFGNIISANRLVAIVSPESAPIKRIIQEAKNRGMLIDATYGRRTRAVIITDSDHIILSAVQPETVANRLNSNKEILEDTLEEDEEEEE.

The protein belongs to the RemA family.

The chain is Putative regulatory protein Teth514_1762 from Thermoanaerobacter sp. (strain X514).